A 422-amino-acid polypeptide reads, in one-letter code: Anhydromevalonate phosphate decarboxylase (422 aa).

Residues Asn134 and Glu197 each contribute to the Mn(2+) site. The active-site Proton acceptor is the Asp244.

The protein belongs to the UbiD family. Requires prenylated FMN as cofactor. Mn(2+) is required as a cofactor.

It carries out the reaction (2E)-3-methyl-5-phosphooxypent-2-enoate + H(+) = isopentenyl phosphate + CO2. It participates in isoprenoid biosynthesis; isopentenyl diphosphate biosynthesis via mevalonate pathway. Its function is as follows. Catalyzes the conversion of trans-anhydromevalonate 5-phosphate (tAHMP) into isopentenyl phosphate. Involved in the archaeal mevalonate (MVA) pathway, which provides fundamental precursors for isoprenoid biosynthesis, such as isopentenyl diphosphate (IPP) and dimethylallyl diphosphate (DMAPP). In Methanosarcina mazei (strain ATCC BAA-159 / DSM 3647 / Goe1 / Go1 / JCM 11833 / OCM 88) (Methanosarcina frisia), this protein is Anhydromevalonate phosphate decarboxylase.